We begin with the raw amino-acid sequence, 2615 residues long: MDVDEDQHAVAVLHHKIQANPELCVSDEQDSCPSDAPKGTARDPESQKPSSPAPWDKNVLNTGSEERLSFINGEPQAPPNWDEGTNSFSNPPPGISHTCNLSASWYHPESSSPLTQHPPRATLVTQPENVEHFAICCFPETDAQALPALGIRVHVASGTALCLLLDFGDNCGAQMRLCTLAGATTVTGYHQYRKEGVYELKAVVHDFHRAEELGPYYVDISHGNVSVFMNSSSIHDSEALSFADSLPQQRGTVVVHCFSSISSYNVSFISQTQVASGQAWCGVTVGYKMQSVSVYTNGTVFAANTNITFVAITEETIPLEFAWYFGENPPVMTTSRSIRRRLSVPQWYRVKVKATSRIGSVVSEPHLIRVQKRIMANRLVSTASALVNANVSFECRLNFGTDVAYLWNFGDDTIELGSSSSSHVYSREGEFTVEVLAFNNVSSTTLRKQLFIVREPCQPPPVKNMGPAKVQIWRSQPLRLGVTFEAAILCNISQGLSYTWSFVSAEMTTVTLPTAVNTRRQTIMLPSYTLECGNYTAIAKVQIKGSMVYSNYCVGVEVRARAPVSVISEGTHIFISTATSTFIILRGAQSYDPDNPGAALRYHWTCTAASSPRWPCFDNSTSYQVDTQAPAISFPAKWLSECCDQFLVTLTVSSRGQNSSQALMFLSTRPDLAFRFVHISWVNFRDISVNWNEEVSLRAVCEDCGDVPDLTYSWDLFLVNATEKSAVEVPFCSTVGLLGALALGTSLKSSKSDLPSNLRAPLTPHSPEPSPTPLGWTALSNLGSISAESTAGGHHVPASGAVAGSGEPMEEYSSLSSLAEEALMTNSSEGSWPSPSSSTDFDDFEAYYSDIQEAVLSLGRQPGTSTNFQEAGPSLSAEESASYGDNLLGPFLHTGRAKPTLMIDWPKALVSQAAFHGYTTSGIMGPAVTIKPFSLSSGKTYVLQASVASKHVLLGKAQLYLTVNQAPQDMSCQVRPHHGMEAYTIFSVFCMSGKPDFHYEFRYRIGNTSSHTLYRGQDTQHYFLLPAGDSSDNYKVIVSTEITDGHGSKVQPCTVAVTVLPRYHGNDCCDKELYNSTLESLSTLRLAGSYMETRNYITMITGILSRLYVESRNTSSCGQWSQIQDVLISSACKVPYTDQEGMMDSIHILRDLISFPNKLSLTSAMCIFKYTKMFLAQGQFSRRLLVDKKLRVEFVLLISGVWEAAKEDARDGDYLQEEGMKIISDMLLACLSDEHQIHVSTGQMEFQTLLHRSPQSSIQNLGFVQVHFPSDLASLHSTTQEATQSSCYISQLMFFMKSPYLGGQVPGQVGGVMIPRLYSCESRRPILRGQLETPVTMEFGEEDYLHKRNPAMFVLLRDEVNVHRFTGLSENSQESLQIHIKFSKPVTRPFPIILLVRFSEKATPSDFLVKRVYFWDEQTVQMYVPAAPWKGANVGYLSLLDADYDRKPPNKYLAGAVNYTVHFQWIQCVFWDKTEWRSEGPYPQPGSSPEKVNCSYHHLAPVSVLRRKLNATLEVSSISEFQSHPHNLLPGIFSAFLLVLYGILVSKSRYVDCHEKKNPGFIFLEEDTLPGYQLYAVVIDTGFRSPVRFTSKVFIVLCGENGCSETKELCCPEKPLFGRNSRHTFILSIPNQLGPLQKIRLWHDSSGSSPCWFISHVMVKELCSGQAWFFSAQCWLAVSKLGGHVLREFFCLSHGLGFWKLFYSKFTEYLEDFHIWLSLYSQPPSRSYLHTQRLAVSFCLLCVYSCLTALVTVRDHQQRPLDVGPTAITLEPFCMALLCTLLACPVAQLLSLLFRCSKEARGDMQASTQWPLRGVKTETPQGHDSSGRPDSRQPSPHPTSDLLPWNDQAWRIAASSSAVVCSPFPMEACSHKHHDLREKSHYSPPSSQAPGSGFEELGSQKSRVCLLWSSSVAWAISGSASLACGLGTGFLGYWFVPAQCMWWLYLLLLSLVCCAFITQPLMICLAALVFAWKRKHDSKFFTESLQDATKGLDLELEEHSRTRVPLSPISYSPDTAEEAERVLATRQRERHLRWAQTPSKAKLRVTGERLRRESIMQAALRDMTTHSIMLLLLLFIAYGRFCPGEISLNHAIRKAFTRKANHSLGDLSSTEDWWDWTLSTLLDELYPERTSARAWGAQPGALGGQCHLIGPPVVKLLKISAGTACTPPRPFSELVEDVLPMHSNDLDLENQNVSPGGPETCGVKKESYMHSLGKTRHEAHAALTALRASKWIDHSTRAMSVHFTLYNPPTQLFTSVILGTECLPSGGLVPSFLVESFRIFYSDSALKYLLMLSELLFLVLNVIHLCFQLWGMTTKGILSYWRKPRHWLELSMVGVAIAYYAASGHLTTLAVNITDQFHKGLYQRLVDIGLMVSWHQRARCLQGILLFLWMLKYVHLLSSLSTMTPFSAVTCFPLFRVLLVGALLLAAHYHSRWFLLFTGTLSHGTSAEAFPGLLLQFPGRSKKDSWHNCLKSDHGVMRCYYGTLFLLLATLGFRMLRATFLTVFQNRKSSHRKPLVTLKDIAVYTWHKVLTLLGLETTLEETEVATDHIYYLDEFSSLLDELLMKIDGLSDSLELSILENQWKRALESRAGDSPPVGSSEYQATGVSGPLAAESE.

The Extracellular segment spans residues methionine 1–histidine 1524. Positions isoleucine 17 to proline 93 are disordered. N-linked (GlcNAc...) asparagine glycans are attached at residues asparagine 224, asparagine 297, asparagine 306, asparagine 390, asparagine 440, asparagine 534, and asparagine 619. PKD domains are found at residues serine 291 to arginine 373 and methionine 375 to proline 456. The REJ domain maps to cysteine 457–asparagine 1349. Positions serine 749 to leucine 815 are disordered. The segment covering alanine 778–serine 789 has biased composition (polar residues). A GAIN-B domain is found at arginine 1364–threonine 1512. A glycan (N-linked (GlcNAc...) asparagine) is linked at asparagine 1458. Cysteine 1468 and cysteine 1494 are oxidised to a cystine. A GPS region spans residues cysteine 1468 to threonine 1512. A glycan (N-linked (GlcNAc...) asparagine) is linked at asparagine 1510. A helical transmembrane segment spans residues proline 1525–valine 1545. The Cytoplasmic segment spans residues serine 1546 to glutamine 1732. Residues glutamine 1573–phenylalanine 1690 enclose the PLAT domain. Residues arginine 1733–valine 1753 traverse the membrane as a helical segment. Over arginine 1754 to proline 1772 the chain is Extracellular. Residues phenylalanine 1773 to leucine 1793 form a helical membrane-spanning segment. Over phenylalanine 1794–cysteine 1905 the chain is Cytoplasmic. Positions serine 1807 to serine 1840 are disordered. The chain crosses the membrane as a helical span at residues leucine 1906–leucine 1926. At glycine 1927 to serine 1950 the chain is on the extracellular side. The helical transmembrane segment at leucine 1951–alanine 1971 threads the bilayer. Over tryptophan 1972 to glutamine 2057 the chain is Cytoplasmic. Residues alanine 2058–tyrosine 2078 traverse the membrane as a helical segment. Residues glycine 2079–tyrosine 2288 are Extracellular-facing. The helical transmembrane segment at leucine 2289–leucine 2309 threads the bilayer. The Cytoplasmic segment spans residues tryptophan 2310–methionine 2332. A helical membrane pass occupies residues valine 2333–isoleucine 2353. The Extracellular segment spans residues threonine 2354–arginine 2379. Residues cysteine 2380–leucine 2400 traverse the membrane as a helical segment. The Cytoplasmic portion of the chain corresponds to serine 2401–proline 2405. A helical membrane pass occupies residues phenylalanine 2406–alanine 2426. Residues alanine 2427–threonine 2483 are Extracellular-facing. A helical membrane pass occupies residues leucine 2484–phenylalanine 2504. Topologically, residues glutamine 2505–glutamate 2615 are cytoplasmic. Residues arginine 2589–glutamate 2615 form a disordered region.

Belongs to the polycystin family. As to quaternary structure, heterodimer. Interacts with PKD2 to form a calcium channel. Interacts with PKD2L1; to form ciliary calcium channel. May interact with GNA12, GNAS, GNAI1 and GNAI2. In terms of tissue distribution, in testis, strong expression in Leydig cells, low level in seminal ducts, myoid cells and tunica vaginalis. Other tissues, including adrenal gland and heart myocardium, also show low expression. In embryo, highly expressed in the node.

It localises to the cell projection. It is found in the cilium membrane. Component of a calcium-permeant ion channel formed by PKD1L2 and PKD1L1 in primary cilia, where it controls cilium calcium concentration, without affecting cytoplasmic calcium concentration, and regulates sonic hedgehog/SHH signaling and GLI2 transcription. The PKD1L1:PKD2L1 channel complex is mechanosensitive only at high pressures and is highly temperature sensitive. Also involved in left/right axis specification downstream of nodal flow by forming a complex with PKD2 in cilia to facilitate flow detection in left/right patterning. May function as a G-protein-coupled receptor. The protein is Polycystin-1-like protein 1 of Mus musculus (Mouse).